The chain runs to 427 residues: 3-phosphoshikimate 1-carboxyvinyltransferase (427 aa).

The 3-phosphoshikimate site is built by lysine 22, serine 23, and arginine 27. A phosphoenolpyruvate-binding site is contributed by lysine 22. Phosphoenolpyruvate is bound by residues glycine 96 and arginine 124. The 3-phosphoshikimate site is built by serine 169, serine 170, glutamine 171, serine 197, aspartate 313, asparagine 336, and lysine 340. Glutamine 171 contributes to the phosphoenolpyruvate binding site. Aspartate 313 functions as the Proton acceptor in the catalytic mechanism. Residues arginine 344, arginine 386, and lysine 411 each contribute to the phosphoenolpyruvate site.

This sequence belongs to the EPSP synthase family. Monomer.

The protein localises to the cytoplasm. It carries out the reaction 3-phosphoshikimate + phosphoenolpyruvate = 5-O-(1-carboxyvinyl)-3-phosphoshikimate + phosphate. It participates in metabolic intermediate biosynthesis; chorismate biosynthesis; chorismate from D-erythrose 4-phosphate and phosphoenolpyruvate: step 6/7. Functionally, catalyzes the transfer of the enolpyruvyl moiety of phosphoenolpyruvate (PEP) to the 5-hydroxyl of shikimate-3-phosphate (S3P) to produce enolpyruvyl shikimate-3-phosphate and inorganic phosphate. The polypeptide is 3-phosphoshikimate 1-carboxyvinyltransferase (Klebsiella pneumoniae (strain 342)).